The chain runs to 555 residues: Glutamine--tRNA ligase (555 aa).

Positions 35-45 (PEPNGYLHIGH) match the 'HIGH' region motif. ATP-binding positions include 36–38 (EPN) and 42–48 (HIGHAKS). L-glutamine is bound by residues D68 and Y213. ATP contacts are provided by residues T232 and 262 to 263 (RL). The 'KMSKS' region motif lies at 269–273 (ITSKR).

It belongs to the class-I aminoacyl-tRNA synthetase family. Monomer.

Its subcellular location is the cytoplasm. It catalyses the reaction tRNA(Gln) + L-glutamine + ATP = L-glutaminyl-tRNA(Gln) + AMP + diphosphate. This is Glutamine--tRNA ligase from Ectopseudomonas mendocina (strain ymp) (Pseudomonas mendocina).